The sequence spans 90 residues: Small ribosomal subunit protein bS16 (90 aa).

The protein belongs to the bacterial ribosomal protein bS16 family.

The sequence is that of Small ribosomal subunit protein bS16 from Lactobacillus helveticus (strain DPC 4571).